A 673-amino-acid polypeptide reads, in one-letter code: UvrABC system protein C (673 aa).

The GIY-YIG domain maps to 16 to 95 (VEPGVYKFRD…IKEFDPRFNV (80 aa)). Residues 208–243 (DKMVRELERRMHAAAEDLDFETAARLRDDVQALRRA) form the UVR domain. A disordered region spans residues 488–526 (RDEAERDELDGTAAGAPLVDDDETPTSRPGIDPTTGRPR).

It belongs to the UvrC family. In terms of assembly, interacts with UvrB in an incision complex.

It localises to the cytoplasm. The UvrABC repair system catalyzes the recognition and processing of DNA lesions. UvrC both incises the 5' and 3' sides of the lesion. The N-terminal half is responsible for the 3' incision and the C-terminal half is responsible for the 5' incision. This is UvrABC system protein C from Nocardia farcinica (strain IFM 10152).